A 1194-amino-acid chain; its full sequence is ATP-dependent RNA helicase DHX30 (1194 aa).

Basic and acidic residues predominate over residues 1–10 (MFSLDSFRKD). Positions 1–27 (MFSLDSFRKDRAQHRQRQCKLPPPRLP) are disordered. A phosphoserine mark is found at serine 6 and arginine 15. Residues 53–121 (PKNLLNSVIG…QAAAAACQLF (69 aa)) form the DRBM domain. Residues 150–199 (ADSWWRPEPTMPPTSWRQLNPESIRPGGPGGLSRSLGREEEEDEEEELEE) are disordered. A compositionally biased stretch (acidic residues) spans 188 to 199 (EEEEDEEEELEE). Phosphoserine is present on residues serine 226 and serine 380. Residues 444–612 (LNAIEQHPVV…FGGCPVIKVP (169 aa)) enclose the Helicase ATP-binding domain. Residue 457–464 (GDTGCGKT) participates in ATP binding. The short motif at 559–562 (DEVH) is the DEAH box element. Residues 654-827 (LVTDLVLHID…NLVLQAKIHM (174 aa)) form the Helicase C-terminal domain.

The protein belongs to the DEAD box helicase family. DEAH subfamily. Identified in a complex with TFAM and SSBP1. Interacts with AGO1 and AGO2. Interacts (via N-terminus) with ZC3HAV1 (via N-terminal domain) in an RNA-independent manner. Found in a complex with GRSF1, DDX28, FASTKD2 and FASTKD5. Phosphorylated on Ser-15.

It is found in the cytoplasm. Its subcellular location is the mitochondrion. The protein localises to the mitochondrion matrix. It localises to the mitochondrion nucleoid. The enzyme catalyses ATP + H2O = ADP + phosphate + H(+). RNA-dependent helicase. Plays an important role in the assembly of the mitochondrial large ribosomal subunit. Required for optimal function of the zinc-finger antiviral protein ZC3HAV1. Associates with mitochondrial DNA. Involved in nervous system development and differentiation through its involvement in the up-regulation of a number of genes which are required for neurogenesis, including GSC, NCAM1, neurogenin, and NEUROD. The polypeptide is ATP-dependent RNA helicase DHX30 (DHX30) (Homo sapiens (Human)).